We begin with the raw amino-acid sequence, 83 residues long: MRFHTLLFLSFLLLVSCALICTAQHPGLKKSGMFHENVGKGQHIEKKRSCIERMQTCEVEAGLPCCSGAPCICPYIGDCICIQ.

The N-terminal stretch at 1-23 (MRFHTLLFLSFLLLVSCALICTA) is a signal peptide. The propeptide occupies 24–48 (QHPGLKKSGMFHENVGKGQHIEKKR). Cystine bridges form between Cys-50–Cys-66, Cys-57–Cys-71, and Cys-65–Cys-81.

Belongs to the neurotoxin 07 (Beta/delta-agtx) family. 03 (aga-4) subfamily. JZTX sub-subfamily. In terms of tissue distribution, expressed by the venom gland.

It localises to the secreted. Functionally, inhibits TTX-sensitive sodium currents in rat dorsal root ganglion (DRG) neurons. In Chilobrachys guangxiensis (Chinese earth tiger tarantula), this protein is U25-theraphotoxin-Cg1a.